Consider the following 96-residue polypeptide: Large ribosomal subunit protein uL23 (96 aa).

Belongs to the universal ribosomal protein uL23 family. In terms of assembly, part of the 50S ribosomal subunit. Contacts protein L29, and trigger factor when it is bound to the ribosome.

One of the early assembly proteins it binds 23S rRNA. One of the proteins that surrounds the polypeptide exit tunnel on the outside of the ribosome. Forms the main docking site for trigger factor binding to the ribosome. The protein is Large ribosomal subunit protein uL23 of Endomicrobium trichonymphae.